We begin with the raw amino-acid sequence, 263 residues long: Virulence plasmid protein pGP6-D-related protein (263 aa).

Belongs to the UPF0137 (pGP6-D) family.

The protein is Virulence plasmid protein pGP6-D-related protein of Chlamydia trachomatis serovar D (strain ATCC VR-885 / DSM 19411 / UW-3/Cx).